Consider the following 202-residue polypeptide: Hypoxanthine-guanine phosphoribosyltransferase (202 aa).

Residues K66 and G67 each contribute to the diphosphate site. Mg(2+) is bound by residues E122 and D123. The Proton acceptor role is filled by D126. GMP-binding positions include K154, 175–176 (FV), and D182. R188 is a diphosphate binding site.

It belongs to the purine/pyrimidine phosphoribosyltransferase family. As to quaternary structure, homodimer and homotetramer in equilibrium. The presence or absence of divalent metal ions, as well as phosphate, can affect the oligomerization state of the enzyme. Likely functions as a tetramer (rather than a dimer) in its biological environment, which is the most active form. The dimeric structure is also active though ~50% of that of the tetramer. Requires Mg(2+) as cofactor.

It localises to the cytoplasm. It catalyses the reaction IMP + diphosphate = hypoxanthine + 5-phospho-alpha-D-ribose 1-diphosphate. The enzyme catalyses GMP + diphosphate = guanine + 5-phospho-alpha-D-ribose 1-diphosphate. It participates in purine metabolism; IMP biosynthesis via salvage pathway; IMP from hypoxanthine: step 1/1. The protein operates within purine metabolism; GMP biosynthesis via salvage pathway; GMP from guanine: step 1/1. Competitively inhibited by acyclic nucleoside phosphonates (ANPs) with Ki values as low as 0.69 uM. Prodrugs of these compounds arrest the growth of a virulent strain of M.tuberculosis with MIC50 values as low as 4.5 uM and possess low cytotoxicity in mammalian cells. Inhibited by pyrrolidine nucleoside bisphosphonates, which are also able to arrest the growth of virulent M.tuberculosis not only in its replicating phase but also in its latent phase, and to arrest the growth of M.tuberculosis in infected macrophages while having low cytotoxicity in mammalian cells. In terms of biological role, purine salvage pathway enzyme that catalyzes the transfer of the ribosyl-5-phosphate group from 5-phospho-alpha-D-ribose 1-diphosphate (PRPP) to the N9 position of the 6-oxopurines hypoxanthine and guanine to form the corresponding ribonucleotides IMP (inosine 5'-monophosphate) and GMP (guanosine 5'-monophosphate), with the release of PPi. Thus, specifically recycles hypoxanthine and guanine imported from the external medium, and converts them to IMP and GMP, respectively. Cannot use xanthine as substrate. This Mycobacterium tuberculosis (strain ATCC 25618 / H37Rv) protein is Hypoxanthine-guanine phosphoribosyltransferase.